A 101-amino-acid polypeptide reads, in one-letter code: Putative pterin-4-alpha-carbinolamine dehydratase (101 aa).

It belongs to the pterin-4-alpha-carbinolamine dehydratase family.

It carries out the reaction (4aS,6R)-4a-hydroxy-L-erythro-5,6,7,8-tetrahydrobiopterin = (6R)-L-erythro-6,7-dihydrobiopterin + H2O. This Rhizobium johnstonii (strain DSM 114642 / LMG 32736 / 3841) (Rhizobium leguminosarum bv. viciae) protein is Putative pterin-4-alpha-carbinolamine dehydratase.